Reading from the N-terminus, the 398-residue chain is Dual-specificity RNA methyltransferase RlmN (398 aa).

Catalysis depends on glutamate 119, which acts as the Proton acceptor. Positions 125–364 constitute a Radical SAM core domain; that stretch reads EADRATLCVS…TIVRKTRGDD (240 aa). Cysteine 132 and cysteine 369 are disulfide-bonded. 3 residues coordinate [4Fe-4S] cluster: cysteine 139, cysteine 143, and cysteine 146. Residues 193 to 194, serine 225, 247 to 249, and asparagine 326 contribute to the S-adenosyl-L-methionine site; these read GE and SLH. The active-site S-methylcysteine intermediate is the cysteine 369.

It belongs to the radical SAM superfamily. RlmN family. The cofactor is [4Fe-4S] cluster.

The protein localises to the cytoplasm. The catalysed reaction is adenosine(2503) in 23S rRNA + 2 reduced [2Fe-2S]-[ferredoxin] + 2 S-adenosyl-L-methionine = 2-methyladenosine(2503) in 23S rRNA + 5'-deoxyadenosine + L-methionine + 2 oxidized [2Fe-2S]-[ferredoxin] + S-adenosyl-L-homocysteine. The enzyme catalyses adenosine(37) in tRNA + 2 reduced [2Fe-2S]-[ferredoxin] + 2 S-adenosyl-L-methionine = 2-methyladenosine(37) in tRNA + 5'-deoxyadenosine + L-methionine + 2 oxidized [2Fe-2S]-[ferredoxin] + S-adenosyl-L-homocysteine. Its function is as follows. Specifically methylates position 2 of adenine 2503 in 23S rRNA and position 2 of adenine 37 in tRNAs. m2A2503 modification seems to play a crucial role in the proofreading step occurring at the peptidyl transferase center and thus would serve to optimize ribosomal fidelity. The protein is Dual-specificity RNA methyltransferase RlmN of Yersinia pseudotuberculosis serotype O:3 (strain YPIII).